The sequence spans 202 residues: Small ribosomal subunit protein uS4 (202 aa).

Residues Met90–Asn152 form the S4 RNA-binding domain.

Belongs to the universal ribosomal protein uS4 family. Part of the 30S ribosomal subunit. Contacts protein S5. The interaction surface between S4 and S5 is involved in control of translational fidelity.

One of the primary rRNA binding proteins, it binds directly to 16S rRNA where it nucleates assembly of the body of the 30S subunit. Its function is as follows. With S5 and S12 plays an important role in translational accuracy. The polypeptide is Small ribosomal subunit protein uS4 (Thermosynechococcus vestitus (strain NIES-2133 / IAM M-273 / BP-1)).